The chain runs to 223 residues: Neurotrophic factor BDNF precursor form (223 aa).

A signal peptide spans Ser-1–Ala-5. A propeptide spanning residues Ala-6–Arg-114 is cleaved from the precursor. An N-linked (GlcNAc...) asparagine glycan is attached at Asn-107. 2 disulfide bridges follow: Cys-127–Cys-194 and Cys-172–Cys-223.

It belongs to the NGF-beta family.

The protein resides in the secreted. In terms of biological role, promotes the survival of neuronal populations that are all located either in the central nervous system or directly connected to it. The sequence is that of Neurotrophic factor BDNF precursor form (BDNF) from Candoia carinata (Papuan tree boa).